Here is a 391-residue protein sequence, read N- to C-terminus: 3-ketoacyl-CoA thiolase (391 aa).

The active-site Acyl-thioester intermediate is the Cys-95. Residues His-347 and Cys-377 each act as proton acceptor in the active site.

This sequence belongs to the thiolase-like superfamily. Thiolase family. Heterotetramer of two alpha chains (FadB) and two beta chains (FadA).

It localises to the cytoplasm. It catalyses the reaction an acyl-CoA + acetyl-CoA = a 3-oxoacyl-CoA + CoA. It participates in lipid metabolism; fatty acid beta-oxidation. Its function is as follows. Catalyzes the final step of fatty acid oxidation in which acetyl-CoA is released and the CoA ester of a fatty acid two carbons shorter is formed. This Pseudomonas entomophila (strain L48) protein is 3-ketoacyl-CoA thiolase.